We begin with the raw amino-acid sequence, 101 residues long: Ascorbate-specific PTS system EIIB component (101 aa).

The region spanning 1 to 100 (MTVRILAVCG…VIKEHFPQDV (100 aa)) is the PTS EIIB type-2 domain. The Phosphocysteine intermediate role is filled by C9. Position 9 is a phosphocysteine (C9).

It localises to the cytoplasm. The enzyme catalyses N(pros)-phospho-L-histidyl-[protein] + L-ascorbate(out) = L-ascorbate 6-phosphate(in) + L-histidyl-[protein]. Functionally, the phosphoenolpyruvate-dependent sugar phosphotransferase system (sugar PTS), a major carbohydrate active transport system, catalyzes the phosphorylation of incoming sugar substrates concomitantly with their translocation across the cell membrane. The enzyme II UlaABC PTS system is involved in ascorbate transport. The sequence is that of Ascorbate-specific PTS system EIIB component (ulaB) from Escherichia coli O157:H7.